A 1503-amino-acid polypeptide reads, in one-letter code: Lysophospholipase NTE1 (1503 aa).

Residues 1-25 are Cytoplasmic-facing; it reads MDSSTAALATASAKLDAVAQQGSSS. Residues 26-46 traverse the membrane as a helical segment; sequence WIGFFANIILGIISLVYSILY. Over 47-71 the chain is Lumenal; sequence SVLKLTTFSIPSLLYTLFSTSLTVT. The helical transmembrane segment at 72 to 92 threads the bilayer; it reads MNATTLMLIIVLVFSLVSWFV. The Cytoplasmic portion of the chain corresponds to 93-1503; sequence RYRYLNMYSR…RTMAPRRASI (1411 aa). Disordered stretches follow at residues 252-348, 454-561, and 722-745; these read RHGG…TTSV, TKGI…SNPF, and KNESSLNIGPGNQQGSAGRDRFMD. 6 stretches are compositionally biased toward polar residues: residues 262–272, 285–302, 487–496, 506–542, 552–561, and 723–737; these read TSATETYTSSR, STVSVPTTPQLERSSSHG, QRPSSVTASP, KHTSNSGDLLMNIQLSRNGGRRSTSNMDPLTRQSTLL, PLSQRTSNPF, and NESSLNIGPGNQQGS. A nucleoside 3',5'-cyclic phosphate-binding positions include 658-777 and 821-941; these read GLPV…GYVG and RLTN…IASR. In terms of domain architecture, PNPLA spans 1200–1364; that stretch reads LVLGGGGARG…IDNLTVSHMK (165 aa). Residues 1204 to 1209 carry the GXGXXG motif; sequence GGGARG. The GXSXG motif lies at 1231 to 1235; that stretch reads GTSIG. Ser1233 serves as the catalytic Nucleophile. Catalysis depends on Asp1351, which acts as the Proton acceptor. The DGA/G signature appears at 1351-1353; it reads DGG.

This sequence belongs to the NTE family.

It localises to the endoplasmic reticulum membrane. The enzyme catalyses a 1-acyl-sn-glycero-3-phosphocholine + H2O = sn-glycerol 3-phosphocholine + a fatty acid + H(+). Inhibited by organophosphorus esters. Functionally, intracellular phospholipase B that catalyzes the double deacylation of phosphatidylcholine (PC) to glycerophosphocholine (GroPCho). Plays an important role in membrane lipid homeostasis. Responsible for the rapid PC turnover in response to inositol, elevated temperatures, or when choline is present in the growth medium. The polypeptide is Lysophospholipase NTE1 (NTE1) (Pyricularia oryzae (strain 70-15 / ATCC MYA-4617 / FGSC 8958) (Rice blast fungus)).